Consider the following 820-residue polypeptide: Cation/H(+) antiporter 17 (820 aa).

12 helical membrane passes run 30–50 (LPLL…LAFL), 58–75 (RVIA…SALG), 90–110 (LTVL…LVGL), 124–144 (ALSI…GTSF), 159–179 (FLVF…ARIL), 192–212 (IALS…ALAV), 222–242 (LTSL…IFVV), 276–296 (FVTD…GVIF), 313–333 (LVSG…TNVA), 342–362 (GLLV…TVLV), 374–394 (LALG…LNIG), and 404–424 (IFAI…PLVL). Residues S817 and S819 each carry the phosphoserine modification.

It belongs to the monovalent cation:proton antiporter 2 (CPA2) transporter (TC 2.A.37) family. CHX (TC 2.A.37.4) subfamily. Predominantly expressed in epidermal and cortical cells of mature roots but also barely detected in leaves.

It is found in the membrane. In terms of biological role, operates as a K(+)/H(+) antiporter that controls K(+) acquisition and homeostasis. The chain is Cation/H(+) antiporter 17 (CHX17) from Arabidopsis thaliana (Mouse-ear cress).